Reading from the N-terminus, the 724-residue chain is Eukaryotic elongation factor 2 kinase (724 aa).

A2 carries the post-translational modification N-acetylalanine. S27 bears the Phosphoserine mark. S61 is modified (phosphoserine; by autocatalysis). S70, S73, and S77 each carry phosphoserine. The interval 80-93 is calmodulin-binding; it reads FKEAWKHAIEKAKH. The region spanning 115–325 is the Alpha-type protein kinase domain; sequence RYNAVTGEWL…ICQSMGLTPF (211 aa). A Phosphoserine modification is found at S242. 295–301 lines the ATP pocket; the sequence is GDGNLGV. Residues T347 and T352 each carry the phosphothreonine; by autocatalysis modification. The segment at 353–476 is disordered; the sequence is EEKCGSPRIR…HESDEDSLGS (124 aa). Phosphoserine; by MAPK13 and CDK1 is present on S358. Low complexity predominate over residues 358–376; it reads SPRIRTLSSSRPPLLLRLS. At S365 the chain carries Phosphoserine; by autocatalysis, RPS6KA1 and RPS6KB1. A compositionally biased stretch (polar residues) spans 385–403; that stretch reads SDVTFDSLPSSPSSATPHS. S391 is modified (phosphoserine). Phosphoserine; by AMPK is present on S397. Composition is skewed to basic and acidic residues over residues 421–435 and 444–469; these read GPRD…RDSE and SEKR…RHES. Phosphoserine occurs at positions 434, 444, and 469. S473 carries the post-translational modification Phosphoserine; by autocatalysis. Phosphoserine is present on S476. S499 is modified (phosphoserine; by PKA).

Belongs to the protein kinase superfamily. Alpha-type protein kinase family. Monomer or homodimer. Interacts with Calmodulin/CALM1; this interaction is strictly required for phosphorylation activity. Post-translationally, autophosphorylated at multiple residues, Thr-347 being the major site. Phosphorylated by AMP-activated protein kinase AMPK at Ser-397 leading to EEF2K activation and protein synthesis inhibition. Phosphorylated by TRPM7 at Ser-77 resulting in improved protein stability, higher EE2F phosphorylated and subsequently reduced rate of protein synthesis. Phosphorylation by other kinases such as CDK1 and MAPK13 at Ser-358 or RPS6KA1 and RPS6KB1 at Ser-365 instead decrease EEF2K activity and promote protein synthesis. In terms of tissue distribution, ubiquitously expressed. Particularly abundant in skeletal muscle and heart.

It carries out the reaction [translation elongation factor 2] + ATP = [translation elongation factor 2]-phosphate + ADP + H(+). With respect to regulation, undergoes calcium/calmodulin-dependent intramolecular autophosphorylation, and this results in it becoming partially calcium/calmodulin-independent. Its function is as follows. Threonine kinase that regulates protein synthesis by controlling the rate of peptide chain elongation. Upon activation by a variety of upstream kinases including AMPK or TRPM7, phosphorylates the elongation factor EEF2 at a single site, renders it unable to bind ribosomes and thus inactive. In turn, the rate of protein synthesis is reduced. The chain is Eukaryotic elongation factor 2 kinase (Eef2k) from Mus musculus (Mouse).